We begin with the raw amino-acid sequence, 153 residues long: MRKVAIPVAILALIGLDQWVKHWVVANISLNQVIKAIPGVFSLTYLQNRGAAFSILQNQKYFFVILTVLVIGAALFYLVKNYQKSLWLVLSLILIISGGIGNFIDRVHLGYVVDMVQLDFIDFAIFNVADSYLTVGVLLLILILWKEENGSHH.

2 consecutive transmembrane segments (helical) span residues 61-81 (YFFV…LVKN) and 85-105 (SLWL…NFID). Residues aspartate 114 and aspartate 130 contribute to the active site. Residues 125–145 (IFNVADSYLTVGVLLLILILW) traverse the membrane as a helical segment.

This sequence belongs to the peptidase A8 family.

It localises to the cell membrane. The catalysed reaction is Release of signal peptides from bacterial membrane prolipoproteins. Hydrolyzes -Xaa-Yaa-Zaa-|-(S,diacylglyceryl)Cys-, in which Xaa is hydrophobic (preferably Leu), and Yaa (Ala or Ser) and Zaa (Gly or Ala) have small, neutral side chains.. The protein operates within protein modification; lipoprotein biosynthesis (signal peptide cleavage). This protein specifically catalyzes the removal of signal peptides from prolipoproteins. This is Lipoprotein signal peptidase from Streptococcus thermophilus (strain CNRZ 1066).